A 299-amino-acid polypeptide reads, in one-letter code: Lathosterol oxidase (299 aa).

Transmembrane regions (helical) follow at residues 32–52, 79–99, and 117–137; these read VSLL…CATL, FTVK…LLEL, and IHLI…IYWI. The Fatty acid hydroxylase domain occupies 124–252; that stretch reads ISFLFFTDML…YFTLWDRIGG (129 aa). Residues 138–143 carry the Histidine box-1 motif; sequence HRGLHH. The short motif at 151–155 is the Histidine box-2 element; the sequence is HKPHH. Residues 228–233 carry the Histidine box-3 motif; that stretch reads HHTDHH. A Phosphoserine modification is found at S253.

Belongs to the sterol desaturase family. Requires Fe cation as cofactor.

The protein resides in the endoplasmic reticulum membrane. It carries out the reaction a Delta(7)-sterol + 2 Fe(II)-[cytochrome b5] + O2 + 2 H(+) = a Delta(5),Delta(7)-sterol + 2 Fe(III)-[cytochrome b5] + 2 H2O. The enzyme catalyses lathosterol + 2 Fe(II)-[cytochrome b5] + O2 + 2 H(+) = 7-dehydrocholesterol + 2 Fe(III)-[cytochrome b5] + 2 H2O. It catalyses the reaction 5alpha-cholesta-7,24-dien-3beta-ol + 2 Fe(II)-[cytochrome b5] + O2 + 2 H(+) = 7-dehydrodesmosterol + 2 Fe(III)-[cytochrome b5] + 2 H2O. It participates in steroid biosynthesis; cholesterol biosynthesis. Catalyzes the penultimate step of the biosynthesis of cholesterol, the dehydrogenation of lathosterol into 7-dehydrocholesterol (7-DHC). Cholesterol is the major sterol component in mammalian membranes and a precursor for bile acid and steroid hormone synthesis. In addition to its essential role in cholesterol biosynthesis, it also indirectly regulates ferroptosis through the production of 7-DHC. By diverting the spread of damage caused by peroxyl radicals from the phospholipid components to its sterol nucleus, 7-DHC prevents this form of cell death. This chain is Lathosterol oxidase, found in Rattus norvegicus (Rat).